Reading from the N-terminus, the 212-residue chain is Lipid A acyltransferase PagP (212 aa).

An N-terminal signal peptide occupies residues 1–24 (MYLKRTLITLSLITLPIVPFLSYA). The segment covering 36-47 (NLAPVTVDSSDP) has biased composition (polar residues). Residues 36-56 (NLAPVTVDSSDPVSDKQGESW) are disordered. Active-site residues include His-84, Asp-127, and Ser-128.

Belongs to the lipid A palmitoyltransferase family. Homodimer.

It localises to the cell outer membrane. It catalyses the reaction a lipid A + a 1,2-diacyl-sn-glycero-3-phosphocholine = a hepta-acyl lipid A + a 2-acyl-sn-glycero-3-phosphocholine. The enzyme catalyses a lipid IVA + a 1,2-diacyl-sn-glycero-3-phosphocholine = a lipid IVB + a 2-acyl-sn-glycero-3-phosphocholine. The catalysed reaction is a lipid IIA + a 1,2-diacyl-sn-glycero-3-phosphocholine = a lipid IIB + a 2-acyl-sn-glycero-3-phosphocholine. Functionally, transfers a fatty acid residue from the sn-1 position of a phospholipid to the N-linked hydroxyfatty acid chain on the proximal unit of lipid A or its precursors. This is Lipid A acyltransferase PagP from Pectobacterium carotovorum subsp. carotovorum (strain PC1).